Reading from the N-terminus, the 1193-residue chain is DNA-directed RNA polymerase subunit beta (1193 aa).

Positions 1173 to 1193 (QQAKEAAELEKAKEEALDKTE) are disordered. Residues 1177–1193 (EAAELEKAKEEALDKTE) show a composition bias toward basic and acidic residues.

It belongs to the RNA polymerase beta chain family. In terms of assembly, the RNAP catalytic core consists of 2 alpha, 1 beta, 1 beta' and 1 omega subunit. When a sigma factor is associated with the core the holoenzyme is formed, which can initiate transcription.

It catalyses the reaction RNA(n) + a ribonucleoside 5'-triphosphate = RNA(n+1) + diphosphate. Functionally, DNA-dependent RNA polymerase catalyzes the transcription of DNA into RNA using the four ribonucleoside triphosphates as substrates. The sequence is that of DNA-directed RNA polymerase subunit beta from Streptococcus thermophilus (strain CNRZ 1066).